Reading from the N-terminus, the 137-residue chain is Ribosomal RNA large subunit methyltransferase H (137 aa).

S-adenosyl-L-methionine is bound by residues Leu-56, Gly-85, and 104–109; that span reads LSPLTF.

This sequence belongs to the RNA methyltransferase RlmH family. In terms of assembly, homodimer.

The protein resides in the cytoplasm. It catalyses the reaction pseudouridine(1915) in 23S rRNA + S-adenosyl-L-methionine = N(3)-methylpseudouridine(1915) in 23S rRNA + S-adenosyl-L-homocysteine + H(+). Functionally, specifically methylates the pseudouridine at position 1915 (m3Psi1915) in 23S rRNA. This Prochlorococcus marinus subsp. pastoris (strain CCMP1986 / NIES-2087 / MED4) protein is Ribosomal RNA large subunit methyltransferase H.